Here is a 77-residue protein sequence, read N- to C-terminus: Conotoxin PnMEKL-04 (77 aa).

An N-terminal signal peptide occupies residues 1-19; that stretch reads MEKLTILLLVAAVLMSTQA. Positions 20–45 are excised as a propeptide; that stretch reads LPQGGGENRLKENIKFLLKRKTAADR. 3 cysteine pairs are disulfide-bonded: Cys51–Cys65, Cys58–Cys69, and Cys64–Cys73.

It belongs to the conotoxin O2 superfamily. Expressed by the venom duct.

The protein resides in the secreted. The chain is Conotoxin PnMEKL-04 from Conus pennaceus (Feathered cone).